Here is a 50-residue protein sequence, read N- to C-terminus: Fungus-induced-related protein 15 (50 aa).

The signal sequence occupies residues M1–G21.

Functionally, may have role in hypoxia response. The chain is Fungus-induced-related protein 15 (fipr-15) from Caenorhabditis elegans.